A 255-amino-acid chain; its full sequence is Ribonuclease PH (255 aa).

Phosphate-binding positions include arginine 86 and 124–126 (GTR).

This sequence belongs to the RNase PH family. Homohexameric ring arranged as a trimer of dimers.

It catalyses the reaction tRNA(n+1) + phosphate = tRNA(n) + a ribonucleoside 5'-diphosphate. Its function is as follows. Phosphorolytic 3'-5' exoribonuclease that plays an important role in tRNA 3'-end maturation. Removes nucleotide residues following the 3'-CCA terminus of tRNAs; can also add nucleotides to the ends of RNA molecules by using nucleoside diphosphates as substrates, but this may not be physiologically important. Probably plays a role in initiation of 16S rRNA degradation (leading to ribosome degradation) during starvation. In Hydrogenobaculum sp. (strain Y04AAS1), this protein is Ribonuclease PH.